A 445-amino-acid polypeptide reads, in one-letter code: MKLFGTDGVRGKAGEFLDSFLAMRLAMAAGIYFKDKALTNNILVGKDTRRSGYMIENAIVSGLTSIGYNVIEIGPMPTPAIAFLTEDMRCDAGIMISASHNPYYDNGIKFFDAHGNKLDEQAEAKIEEIYFNDKLIEEARTTKSQIGQAKRIDDVIGRYIVSIKNSFPKELTLKSLRVVLDVAHGASYKVAPTVFRELGADVIVINDKPNGLNINENCGALHPLNLALEVKKFRADVGFAFDGDADRLVVVDEKGEVAHGDSLLGVLALFLKKQGKLKSSVVSTIMSNGALKEFLTKYKIPHETCNVGDKYVLEKLKECGGNFGGEQSGHIIFSDYAKTGDGLVAALQFSALMLSEAKSASEILNQVKPYPQLLHNLKISEKKDLSKLAGLEELKKDLEKKGIASLFRYSGTENLIRLLLEAKDIKLLEKEMKVVESFFMKVLNA.

The active-site Phosphoserine intermediate is serine 99. Residues serine 99, aspartate 242, aspartate 244, and aspartate 246 each coordinate Mg(2+). Serine 99 is subject to Phosphoserine.

Belongs to the phosphohexose mutase family. Mg(2+) serves as cofactor. In terms of processing, activated by phosphorylation.

The enzyme catalyses alpha-D-glucosamine 1-phosphate = D-glucosamine 6-phosphate. Catalyzes the conversion of glucosamine-6-phosphate to glucosamine-1-phosphate. The polypeptide is Phosphoglucosamine mutase (Campylobacter lari (strain RM2100 / D67 / ATCC BAA-1060)).